The following is a 417-amino-acid chain: Pigment epithelium-derived factor (417 aa).

Positions 1 to 19 are cleaved as a signal peptide; that stretch reads MQALVLLLWTGALLGHGSS. The segment at 17–41 is disordered; it reads GSSQNVPSSSEGSPVPDSTGEPVEE. The span at 18 to 28 shows a compositional bias: polar residues; it reads SSQNVPSSSEG. Gln-20 is modified (pyrrolidone carboxylic acid). Position 24 is a phosphoserine (Ser-24). Residue Asn-284 is glycosylated (N-linked (GlcNAc...) asparagine).

The protein belongs to the serpin family. In terms of assembly, interacts with PNPLA2; this interaction stimulates the phospholipase A2 activity of PNPLA2. As to expression, highly expressed in the liver, gastric glandular mucosa and renal tubules. It is also expressed in the brain, heart, lung retina and testes.

It is found in the secreted. The protein resides in the melanosome. Functionally, neurotrophic protein; induces extensive neuronal differentiation in retinoblastoma cells. Potent inhibitor of angiogenesis. As it does not undergo the S (stressed) to R (relaxed) conformational transition characteristic of active serpins, it exhibits no serine protease inhibitory activity. This is Pigment epithelium-derived factor (Serpinf1) from Mus musculus (Mouse).